We begin with the raw amino-acid sequence, 172 residues long: Lipoprotein signal peptidase (172 aa).

3 helical membrane-spanning segments follow: residues 10-30 (LIWLLLSVLVVGLDQWSKAWV), 68-88 (WQLWFFTALAVGISGLLAFWL), and 98-118 (SALPYALVIGGAIGNVIDRLM). Active-site residues include Asp124 and Asp142. Residues 138 to 158 (FNIADSAIVGGAIGIAVFGLF) form a helical membrane-spanning segment.

This sequence belongs to the peptidase A8 family.

It localises to the cell inner membrane. It carries out the reaction Release of signal peptides from bacterial membrane prolipoproteins. Hydrolyzes -Xaa-Yaa-Zaa-|-(S,diacylglyceryl)Cys-, in which Xaa is hydrophobic (preferably Leu), and Yaa (Ala or Ser) and Zaa (Gly or Ala) have small, neutral side chains.. The protein operates within protein modification; lipoprotein biosynthesis (signal peptide cleavage). This protein specifically catalyzes the removal of signal peptides from prolipoproteins. The chain is Lipoprotein signal peptidase from Xanthomonas euvesicatoria pv. vesicatoria (strain 85-10) (Xanthomonas campestris pv. vesicatoria).